Here is a 769-residue protein sequence, read N- to C-terminus: MSNNLRRVFLKPAEENSGNASRCVSGCMYQVVQTIGSDGKNLLQLLPIPKSSGNLIPLVQSSVMSDALKGNTGKPVQVTFQTQISSSSTSASVQLPIFQPASSSNYFLTRTVDTSEKGRVTSVGTGNFSSSVSKVQSHGVKIDGLTMQTFAVPPSTQKDSSFIVVNTQSLPVTVKSPVLPSGHHLQIPAHAEVKSVPASSLPPSVQQKILATATTSTSGMVEASQMPTVIYVSPVNTVKNVVTKNFQNIYPKPVTEIAKPVILNTTQIPKNVATETQLKGGQHSQAAPVKWIFQDNLQPFTPSLVPVKSSNNVASKILKTFVDRKNLGDNTINMPPLSTIDPSGTRSKNMPIKDNALVMFNGKVYLLAKKGTDVLPSQIDQQNSVSPDTPVRKDTLQTVSSSPVTEISREVVNIVLAKSKSSQMETKSLSNTQLASMANLRAEKNKVEKPSPSTTNPHMNQSSNYLKQSKTLFTNPIFPVGFSTGHNAPRKVTAVIYARKGSVLQSIEKISSSVDATTVTSQQCVFRDQEPKIHNEMASTSDKGAQGRNDKKDSQGRSNKALHLKSDAEFKKIFGLTKDLRVCLTRIPDHLTSGEGFDSFSSLVKSGTYKETEFMVKEGERKQQNFDKKRKAKTNKKMDHIKKRKTENAYNAIINGEANVTGSQLLSSILPTSDVSQHNILTSHSKTRQEKRTEMEYYTHEKQEKGTLNSNAAYEQSHFFNKNYTEDIFPVTPPELEETIRDEKIRRLKQVLREKEAALEEMRKKMHQK.

Glycyl lysine isopeptide (Lys-Gly) (interchain with G-Cter in SUMO2) cross-links involve residues lysine 259 and lysine 279. Polar residues predominate over residues 378–387; that stretch reads QIDQQNSVSP. The segment at 378–400 is disordered; sequence QIDQQNSVSPDTPVRKDTLQTVS. Serine 402, serine 430, and serine 436 each carry phosphoserine. Residue lysine 446 forms a Glycyl lysine isopeptide (Lys-Gly) (interchain with G-Cter in SUMO2) linkage. The residue at position 502 (serine 502) is a Phosphoserine. Positions 528–562 are disordered; the sequence is DQEPKIHNEMASTSDKGAQGRNDKKDSQGRSNKAL. Residues 580–584 carry the PxVxL motif motif; that stretch reads LRVCL. Serine 599 carries the post-translational modification Phosphoserine. Lysine 605 participates in a covalent cross-link: Glycyl lysine isopeptide (Lys-Gly) (interchain with G-Cter in SUMO2). Short sequence motifs (nuclear localization signal) lie at residues 628-631 and 642-645; these read KKRK. Lysine 702 is covalently cross-linked (Glycyl lysine isopeptide (Lys-Gly) (interchain with G-Cter in SUMO2)). Threonine 732 carries the post-translational modification Phosphothreonine. Residues 740–769 adopt a coiled-coil conformation; it reads IRDEKIRRLKQVLREKEAALEEMRKKMHQK.

It belongs to the LRIF1 family. In terms of assembly, interacts with RARA. Interacts with SMCHD1; leading to recruitment to inactivated chromosome X in females. Interacts (via PxVxL motif) with HP1 (CBX1/HP1-beta, CBX3/HP1-gamma and CBX5/HP1-alpha). As to expression, widely expressed, with the highest expression levels in heart, liver and placenta.

The protein resides in the chromosome. It localises to the nucleus matrix. Functionally, together with SMCHD1, involved in chromosome X inactivation in females by promoting the compaction of heterochromatin. Also able to repress the ligand-induced transcriptional activity of retinoic acid receptor alpha (RARA), possibly through direct recruitment of histone deacetylases. Also required for silencing of the DUX4 locus in somatic cells. The sequence is that of Ligand-dependent nuclear receptor-interacting factor 1 from Homo sapiens (Human).